Consider the following 481-residue polypeptide: Cerebral cavernous malformations 2 protein-like (481 aa).

Disordered regions lie at residues 161–193 (PVPAGMDGSPGGSGRDPGPPGAAPEKRRVGTAE) and 214–290 (EARA…DPQN). Over residues 184 to 193 (PEKRRVGTAE) the composition is skewed to basic and acidic residues. Residues 214-223 (EARAAGGGGS) show a composition bias toward gly residues. Positions 237–251 (WERRQTFSGSWERRH) are enriched in basic and acidic residues.

It belongs to the CCM2 family.

This is Cerebral cavernous malformations 2 protein-like (Ccm2l) from Mus musculus (Mouse).